A 298-amino-acid polypeptide reads, in one-letter code: Iron/alpha-ketoglutarate-dependent dioxygenase ausO (298 aa).

Fe cation contacts are provided by H130, D132, and H211.

It belongs to the PhyH family. Homodimer. Fe cation serves as cofactor.

It functions in the pathway secondary metabolite biosynthesis; terpenoid biosynthesis. In terms of biological role, iron/alpha-ketoglutarate-dependent dioxygenase; part of the gene cluster that mediates the biosynthesis of calidodehydroaustin, a fungal meroterpenoid. The first step of the pathway is the synthesis of 3,5-dimethylorsellinic acid by the polyketide synthase ausA. 3,5-dimethylorsellinic acid is then prenylated by the polyprenyl transferase ausN. Further epoxidation by the FAD-dependent monooxygenase ausM and cyclization by the probable terpene cyclase ausL lead to the formation of protoaustinoid A. Protoaustinoid A is then oxidized to spiro-lactone preaustinoid A3 by the combined action of the FAD-binding monooxygenases ausB and ausC, and the dioxygenase ausE. Acid-catalyzed keto-rearrangement and ring contraction of the tetraketide portion of preaustinoid A3 by ausJ lead to the formation of preaustinoid A4. The aldo-keto reductase ausK, with the help of ausH, is involved in the next step by transforming preaustinoid A4 into isoaustinone which is in turn hydroxylated by the P450 monooxygenase ausI to form austinolide. The cytochrome P450 monooxygenase ausG modifies austinolide to austinol. Austinol is further acetylated to austin by the O-acetyltransferase ausP, which spontaneously changes to dehydroaustin. The cytochrome P450 monooxygenase ausR then converts dehydroaustin is into 7-dehydrodehydroaustin. The hydroxylation catalyzed by ausR permits the O-acetyltransferase ausQ to add an additional acetyl group to the molecule, leading to the formation of acetoxydehydroaustin. The short chain dehydrogenase ausT catalyzes the reduction of the double bond present between carbon atoms 1 and 2 to convert 7-dehydrodehydroaustin into 1,2-dihydro-7-hydroxydehydroaustin. AusQ catalyzes not only an acetylation reaction but also the addition of the PKS ausV diketide product to 1,2-dihydro-7-hydroxydehydroaustin, forming precalidodehydroaustin. Finally, the iron/alpha-ketoglutarate-dependent dioxygenase converts precalidodehydroaustin into calidodehydroaustin. The protein is Iron/alpha-ketoglutarate-dependent dioxygenase ausO of Aspergillus calidoustus.